The primary structure comprises 216 residues: Adenylate kinase (216 aa).

10–15 (GSGKGT) is a binding site for ATP. An NMP region spans residues 30–59 (STGDMLRAAVKEGTPMGVKAKAKMDAGALV). Residues Thr31, Arg36, 57–59 (ALV), 85–88 (GFPR), and Gln92 contribute to the AMP site. An LID region spans residues 126 to 163 (GRRTCRDCGKMYHVEFDAPAVADKCDKCGGQLFQRDDD). Arg127 is a binding site for ATP. 4 residues coordinate Zn(2+): Cys130, Cys133, Cys150, and Cys153. Residues Arg160 and Arg171 each coordinate AMP. Lys199 is a binding site for ATP.

It belongs to the adenylate kinase family. In terms of assembly, monomer.

Its subcellular location is the cytoplasm. The enzyme catalyses AMP + ATP = 2 ADP. It functions in the pathway purine metabolism; AMP biosynthesis via salvage pathway; AMP from ADP: step 1/1. Its function is as follows. Catalyzes the reversible transfer of the terminal phosphate group between ATP and AMP. Plays an important role in cellular energy homeostasis and in adenine nucleotide metabolism. This chain is Adenylate kinase, found in Syntrophotalea carbinolica (strain DSM 2380 / NBRC 103641 / GraBd1) (Pelobacter carbinolicus).